The sequence spans 350 residues: Biotin synthase (350 aa).

The Radical SAM core domain occupies 38–256 (NHVQVSTLLS…IAIARIMMPQ (219 aa)). [4Fe-4S] cluster contacts are provided by Cys-53, Cys-57, and Cys-60. 4 residues coordinate [2Fe-2S] cluster: Cys-97, Cys-128, Cys-188, and Arg-260.

This sequence belongs to the radical SAM superfamily. Biotin synthase family. Homodimer. Requires [4Fe-4S] cluster as cofactor. [2Fe-2S] cluster is required as a cofactor.

The catalysed reaction is (4R,5S)-dethiobiotin + (sulfur carrier)-SH + 2 reduced [2Fe-2S]-[ferredoxin] + 2 S-adenosyl-L-methionine = (sulfur carrier)-H + biotin + 2 5'-deoxyadenosine + 2 L-methionine + 2 oxidized [2Fe-2S]-[ferredoxin]. It functions in the pathway cofactor biosynthesis; biotin biosynthesis; biotin from 7,8-diaminononanoate: step 2/2. Functionally, catalyzes the conversion of dethiobiotin (DTB) to biotin by the insertion of a sulfur atom into dethiobiotin via a radical-based mechanism. This is Biotin synthase from Vibrio parahaemolyticus serotype O3:K6 (strain RIMD 2210633).